A 355-amino-acid polypeptide reads, in one-letter code: Homeobox protein knotted-1-like LET6 (355 aa).

Positions 75 to 96 (PFMDNNNNNNPQEDNNSSSSSI) are disordered. Positions 79-96 (NNNNNNPQEDNNSSSSSI) are enriched in low complexity. An ELK domain is found at 237–257 (ELKGQLLRKYSGYLGSLKQEF). The homeobox; TALE-type DNA-binding region spans 258 to 321 (MKKRKKGKLP…NQRKRHWKPS (64 aa)).

It belongs to the TALE/KNOX homeobox family. In terms of tissue distribution, expressed in developing lateral organs and developing ovaries in flowers.

It localises to the nucleus. In terms of biological role, may have a role to play in formative events in ovule and embryo morphogenesis. Probably binds to the DNA sequence 5'-TGAC-3'. This chain is Homeobox protein knotted-1-like LET6 (LET6), found in Solanum lycopersicum (Tomato).